The following is a 168-amino-acid chain: Small ribosomal subunit protein uS8 (168 aa).

The segment at 59-93 (EEYKKMKELAEKSPNPKMKRYLKQLEEYNKGTQYP) is not found in other S8 sequences.

The protein belongs to the universal ribosomal protein uS8 family. As to quaternary structure, part of the 30S ribosomal subunit. Contacts proteins S5 and S12.

In terms of biological role, one of the primary rRNA binding proteins, it binds directly to 16S rRNA central domain where it helps coordinate assembly of the platform of the 30S subunit. The sequence is that of Small ribosomal subunit protein uS8 from Aquifex aeolicus (strain VF5).